Reading from the N-terminus, the 460-residue chain is Amino acid transporter AVT6A (460 aa).

The next 11 helical transmembrane spans lie at 45-65, 66-86, 120-140, 172-192, 199-219, 238-258, 281-301, 336-356, 371-391, 394-414, and 427-447; these read FSGAVFNLATTIIGAGIMALP, ATMKILGLGLGITMIVVMAFL, ILLQVAVLVNNIGVLIVYMII, AAILLITTLGVFAPLACFKRI, SALSVALAVVFLIITAGISIM, LTSFWNLFTVVPVLVTAFICH, ALMLCSSVYIMTSIFGFLLFG, LMLVFPIVFYPLRINIDGLLF, CLTAGLISVIFLGANFIPSIW, FQFTGATAAVCLGFIFPASII, and TTLAIFMIVLAVLSNAIAIYS.

This sequence belongs to the amino acid/polyamine transporter 2 family. Amino acid/auxin permease (AAAP) (TC 2.A.18.6) subfamily.

Its subcellular location is the membrane. This is Amino acid transporter AVT6A from Arabidopsis thaliana (Mouse-ear cress).